The sequence spans 218 residues: Large ribosomal subunit protein uL3 (218 aa).

The segment at 126-169 (HGFSRGPMTHGSKNHRQPGSIGAGTTPGRIYPGKRMSGRYGGKK) is disordered.

It belongs to the universal ribosomal protein uL3 family. Part of the 50S ribosomal subunit. Forms a cluster with proteins L14 and L19.

Its function is as follows. One of the primary rRNA binding proteins, it binds directly near the 3'-end of the 23S rRNA, where it nucleates assembly of the 50S subunit. This Synechococcus sp. (strain CC9902) protein is Large ribosomal subunit protein uL3.